The chain runs to 56 residues: Small ribosomal subunit protein uS14 (56 aa).

4 residues coordinate Zn(2+): Cys-21, Cys-24, Cys-39, and Cys-42.

Belongs to the universal ribosomal protein uS14 family. Zinc-binding uS14 subfamily. As to quaternary structure, part of the 30S ribosomal subunit. Zn(2+) serves as cofactor.

Functionally, binds 16S rRNA, required for the assembly of 30S particles. The chain is Small ribosomal subunit protein uS14 from Pyrococcus furiosus (strain ATCC 43587 / DSM 3638 / JCM 8422 / Vc1).